A 210-amino-acid chain; its full sequence is Regulator of G-protein signaling 17 (210 aa).

The disordered stretch occupies residues 1–21 (MRKRQQSQNEGTQAVSQAPGN). Positions 84-200 (NFDKMMKTPA…LNSQIYKAFV (117 aa)) constitute an RGS domain. Y137 is subject to Phosphotyrosine.

Interacts with GNAI1 and GNAQ. Interacts with GNAZ and GNAI2. Interacts with OPRM1. Forms a complex with mu-opioid receptors and G(alpha)z/i2 subunits, including GNAZ and GNAI2; the formation of this complex results in mu-opioid receptor desensitization. Interacts with HINT1. Post-translationally, N- and O-glycosylated in synapsomal membranes. In terms of processing, serine phosphorylated in synapsomal membranes. Sumoylated with SUMO1 and SUM02 in synaptosomes. The sumoylated forms act as a scaffold for sequestering mu-opioid receptor-activated G(alpha) subunits. Desumoylated by HINT1. Detected in brain (at protein level). Highly expressed in the hypothalamus, periaqueductal gray matter, and pons-medulla. Lower levels in the thalamus, cortex and spinal cord. Weak expression in the striatum and cerebellum.

Its subcellular location is the membrane. The protein localises to the synapse. It localises to the synaptosome. It is found in the nucleus. The protein resides in the cytoplasm. Regulates G protein-coupled receptor signaling cascades, including signaling via muscarinic acetylcholine receptor CHRM2 and dopamine receptor DRD2. Inhibits signal transduction by increasing the GTPase activity of G protein alpha subunits, thereby driving them into their inactive GDP-bound form. Binds selectively to GNAZ and GNAI2 subunits, accelerates their GTPase activity and regulates their signaling activities. Negatively regulates mu-opioid receptor-mediated activation of the G-proteins. The sequence is that of Regulator of G-protein signaling 17 (Rgs17) from Mus musculus (Mouse).